A 223-amino-acid chain; its full sequence is MVHPLFRHAEFYTTVNHIKDLPQATGVEIAFAGRSNAGKSSAINTLVGRGRFAFTSKTPGRTQHINFFQLGEERFMVDLPGYGYAQVPLAIRQHWVHLLSTYLQTRQALYGMILIMDIRHPLTKLDLQMLEWFAQTGKLVHVLLTKADKLSRSKALAVLDEIRQFLSTSYSGCTVQIFSSLTSEGAEEASRLLQDWFDEGGARVQQLNDSEISNQKKTPAKGD.

An EngB-type G domain is found at 25-199 (TGVEIAFAGR…SRLLQDWFDE (175 aa)). GTP-binding positions include 33–40 (GRSNAGKS), 60–64 (GRTQH), 78–81 (DLPG), 145–148 (TKAD), and 178–180 (FSS). Positions 40 and 62 each coordinate Mg(2+).

The protein belongs to the TRAFAC class TrmE-Era-EngA-EngB-Septin-like GTPase superfamily. EngB GTPase family. It depends on Mg(2+) as a cofactor.

In terms of biological role, necessary for normal cell division and for the maintenance of normal septation. In Nitrosomonas eutropha (strain DSM 101675 / C91 / Nm57), this protein is Probable GTP-binding protein EngB.